Here is a 338-residue protein sequence, read N- to C-terminus: DNA-directed RNA polymerase subunit alpha (338 aa).

Residues 1–225 form an alpha N-terminal domain (alpha-NTD) region; that stretch reads MLISQRPTLT…ELFGLARELN (225 aa). An alpha C-terminal domain (alpha-CTD) region spans residues 242–338; sequence YIAAYGMPIE…YIDTDPEETE (97 aa). The disordered stretch occupies residues 314–338; sequence FDPTQLDGYDAATGDYIDTDPEETE.

The protein belongs to the RNA polymerase alpha chain family. In terms of assembly, homodimer. The RNAP catalytic core consists of 2 alpha, 1 beta, 1 beta' and 1 omega subunit. When a sigma factor is associated with the core the holoenzyme is formed, which can initiate transcription.

The enzyme catalyses RNA(n) + a ribonucleoside 5'-triphosphate = RNA(n+1) + diphosphate. Its function is as follows. DNA-dependent RNA polymerase catalyzes the transcription of DNA into RNA using the four ribonucleoside triphosphates as substrates. The polypeptide is DNA-directed RNA polymerase subunit alpha (Corynebacterium diphtheriae (strain ATCC 700971 / NCTC 13129 / Biotype gravis)).